Consider the following 506-residue polypeptide: Protein CYCLOPS (506 aa).

Disordered stretches follow at residues 193-223 (TVNS…LDNP) and 385-434 (KENL…RSST). Residues 202-219 (TPSQTPTFVSPSSSSTSP) are compositionally biased toward low complexity. Basic and acidic residues predominate over residues 385–394 (KENLKDDRKK). Positions 415–418 (KKRR) match the Nuclear localization signal motif. The span at 422–432 (SRKMAEAKERS) shows a compositional bias: basic and acidic residues. Residues 441–506 (IQVVLKRCET…IERIVSDTNT (66 aa)) adopt a coiled-coil conformation.

It belongs to the CYCLOPS family. In terms of tissue distribution, highly epressed in roots. Expressed at very low levels in leaves, stems and panicles.

It localises to the nucleus. Functionally, involved in arbuscular mycorrhizal (AM) symbiosis. Required for fungal infection in roots and arbuscule development during AM symbiosis. This is Protein CYCLOPS from Oryza sativa subsp. japonica (Rice).